Here is a 545-residue protein sequence, read N- to C-terminus: Dual specificity calcium/calmodulin-dependent 3',5'-cyclic nucleotide phosphodiesterase 1A (545 aa).

2 calmodulin-binding regions span residues 24 to 44 and 114 to 137; these read TEKMWQRLKGILRCLVKQLEK and EKPKFRSIVHAVQAGIFVERMYRK. The PDEase domain occupies 142 to 522; sequence VGLTYPAAVI…ERWKELAAQG (381 aa). The Proton donor role is filled by His219. Zn(2+) contacts are provided by His223, His259, Asp260, and Asp366. Position 260 (Asp260) interacts with Mg(2+). The interval 526 to 545 is disordered; sequence LHKNSEELGNTEEKHADTRP.

This sequence belongs to the cyclic nucleotide phosphodiesterase family. PDE1 subfamily. In terms of assembly, homodimer. Interacts with YWHAZ. The cofactor is Zn(2+). It depends on Mg(2+) as a cofactor. Expressed in brain, kidney and testis.

The protein resides in the cell projection. The protein localises to the cilium. It is found in the flagellum. It carries out the reaction a nucleoside 3',5'-cyclic phosphate + H2O = a nucleoside 5'-phosphate + H(+). The enzyme catalyses 3',5'-cyclic GMP + H2O = GMP + H(+). It catalyses the reaction 3',5'-cyclic AMP + H2O = AMP + H(+). With respect to regulation, type I PDE are activated by the binding of calmodulin in the presence of Ca(2+). Activated by the binding of calmodulin in the presence of Ca(2+). Calcium/calmodulin-dependent cyclic nucleotide phosphodiesterase with a dual specificity for the second messengers cGMP and cAMP, which are key regulators of many important physiological processes. Has a higher efficiency with cGMP compared to cAMP. The sequence is that of Dual specificity calcium/calmodulin-dependent 3',5'-cyclic nucleotide phosphodiesterase 1A from Mus musculus (Mouse).